A 904-amino-acid chain; its full sequence is Protein translocase subunit SecA (904 aa).

Residues glutamine 89, 107-111 (GEGKT), and aspartate 502 each bind ATP. Positions 872 to 892 (VESDPTTWGEPSRNDPCPCGS) are disordered. Zn(2+)-binding residues include cysteine 888, cysteine 890, cysteine 899, and histidine 900.

Belongs to the SecA family. In terms of assembly, part of the essential protein translocation apparatus which comprises SecA, SecYEG and auxiliary proteins SecDF-YajC and YidC. Homodimer. Zn(2+) serves as cofactor.

Its subcellular location is the cell inner membrane. The protein resides in the cytoplasm. The enzyme catalyses ATP + H2O + cellular proteinSide 1 = ADP + phosphate + cellular proteinSide 2.. In terms of biological role, part of the Sec protein translocase complex. Interacts with the SecYEG preprotein conducting channel. Has a central role in coupling the hydrolysis of ATP to the transfer of proteins into and across the cell membrane, serving both as a receptor for the preprotein-SecB complex and as an ATP-driven molecular motor driving the stepwise translocation of polypeptide chains across the membrane. This Rhodobacter capsulatus (Rhodopseudomonas capsulata) protein is Protein translocase subunit SecA.